A 125-amino-acid polypeptide reads, in one-letter code: Small ribosomal subunit protein eS8 (125 aa).

The segment covering 1-11 (MAISQGKSTRL) has biased composition (polar residues). The tract at residues 1–38 (MAISQGKSTRLPSGARNVANRGKRKAELGRDPAETRVD) is disordered. Residues 25–38 (KAELGRDPAETRVD) are compositionally biased toward basic and acidic residues.

The protein belongs to the eukaryotic ribosomal protein eS8 family. In terms of assembly, part of the 30S ribosomal subunit.

This Methanobrevibacter smithii (strain ATCC 35061 / DSM 861 / OCM 144 / PS) protein is Small ribosomal subunit protein eS8.